The sequence spans 143 residues: Large ribosomal subunit protein uL15 (143 aa).

Basic residues predominate over residues 1–13; that stretch reads MIRKKKKVKKIRG. A disordered region spans residues 1-39; it reads MIRKKKKVKKIRGSRTCGGGSHKKRRGAGNKGGRGMAGG. Residues 29–38 are compositionally biased toward gly residues; that stretch reads GNKGGRGMAG.

It belongs to the universal ribosomal protein uL15 family. In terms of assembly, part of the 50S ribosomal subunit.

Binds to the 23S rRNA. This is Large ribosomal subunit protein uL15 from Methanocaldococcus jannaschii (strain ATCC 43067 / DSM 2661 / JAL-1 / JCM 10045 / NBRC 100440) (Methanococcus jannaschii).